The sequence spans 441 residues: MSPKPDIRTAMNKLENPLRDDVAGPAPRHQTTQVMVGDVAVGGGAPIVVQSMTNTDTADVEGTIKQIAALARAGSEMVRITVDREEAAAAVPHIRDGIRKLGLTTPIIGDFHYIGHKLLAEYPACAEALDKYRINPGNVGFKNKRDTQFADIVEIAIKNNKAVRIGANWGSLDQELLTKLMDENAASANPRDVRAVTREAMVQSALLSAARAEEIGLPKNKMILSAKVSAVQDLIAVYQDLASRSDYAIHLGLTEAGMGSKGIVASSAALGILLQQGIGDTIRISLTPEPGGDRTREVQVGQELLQTMGFRTFVPLVAACPGCGRTTSTTFQELARSIQDFIRDEMPEWRSRYPGVENLNVAVMGCIVNGPGESKHANIGISLPGTGETPAAPVFVDGEKFRTLRGENIAADFKALVIDYIEQRYGATPKPDAAQMVPAAE.

Residues Cys-320, Cys-323, Cys-366, and Glu-373 each coordinate [4Fe-4S] cluster.

The protein belongs to the IspG family. It depends on [4Fe-4S] cluster as a cofactor.

The catalysed reaction is (2E)-4-hydroxy-3-methylbut-2-enyl diphosphate + oxidized [flavodoxin] + H2O + 2 H(+) = 2-C-methyl-D-erythritol 2,4-cyclic diphosphate + reduced [flavodoxin]. Its pathway is isoprenoid biosynthesis; isopentenyl diphosphate biosynthesis via DXP pathway; isopentenyl diphosphate from 1-deoxy-D-xylulose 5-phosphate: step 5/6. Converts 2C-methyl-D-erythritol 2,4-cyclodiphosphate (ME-2,4cPP) into 1-hydroxy-2-methyl-2-(E)-butenyl 4-diphosphate. The chain is 4-hydroxy-3-methylbut-2-en-1-yl diphosphate synthase (flavodoxin) from Rhodopseudomonas palustris (strain ATCC BAA-98 / CGA009).